The following is a 254-amino-acid chain: Imidazole glycerol phosphate synthase subunit HisF (254 aa).

Residues Asp12 and Asp132 contribute to the active site.

This sequence belongs to the HisA/HisF family. As to quaternary structure, heterodimer of HisH and HisF.

It is found in the cytoplasm. It carries out the reaction 5-[(5-phospho-1-deoxy-D-ribulos-1-ylimino)methylamino]-1-(5-phospho-beta-D-ribosyl)imidazole-4-carboxamide + L-glutamine = D-erythro-1-(imidazol-4-yl)glycerol 3-phosphate + 5-amino-1-(5-phospho-beta-D-ribosyl)imidazole-4-carboxamide + L-glutamate + H(+). Its pathway is amino-acid biosynthesis; L-histidine biosynthesis; L-histidine from 5-phospho-alpha-D-ribose 1-diphosphate: step 5/9. Functionally, IGPS catalyzes the conversion of PRFAR and glutamine to IGP, AICAR and glutamate. The HisF subunit catalyzes the cyclization activity that produces IGP and AICAR from PRFAR using the ammonia provided by the HisH subunit. The sequence is that of Imidazole glycerol phosphate synthase subunit HisF from Symbiobacterium thermophilum (strain DSM 24528 / JCM 14929 / IAM 14863 / T).